Here is a 574-residue protein sequence, read N- to C-terminus: MNLKNTIKEDIQDALIKIAIINCDPVITLNKKTKIGHYQLNNLIKIANISNLKPFELANRIILNIKKKYMYKEITFSQPGFINFLINPYWISEQLEKIFLSPRLGINHVNAQNIVIDYSSPNIAKEMHIGHLRSTIIGDVMARILDFLGHNVIRANHIGDWGTQFGMLIAYLEVKKLVNSPLSLMKLEEYYCKAKKKYDIDQLFAEKSREYVVKLQNGDQYCYSIWKKLVSITMLENCKIYKRLHVTLKKKHTMGESIYNKMLPNIIEDLKNKKIAIEKNGSTIVFLKEFKNRLGEPMGVVIQKKDKGFLYSTTDIACLKYRYQVLHADRIIYYTDSRQHQHLLQAWTIAKKALYISQNLLLEHHIFGMMLSKDKRPFKTRDGDTIKLSALLDEATERAMRLIKNKQPNLSKKKLNQLSNIIGVGAVKYADLSKNRNTNYIFDWNEMLSFEGNTAPYIQYAYTRIVSILKKSNMPIKKLKEKIFLTKESEINLAIKILEFEEIILLISQKGTPHILCKYLYHLATSFSHFYENCSILFPKKIKTCKSRLKLSILTAKTLKKGLNMLGIRVVKKM.

The 'HIGH' region motif lies at 121–131 (PNIAKEMHIGH).

This sequence belongs to the class-I aminoacyl-tRNA synthetase family. In terms of assembly, monomer.

It is found in the cytoplasm. The catalysed reaction is tRNA(Arg) + L-arginine + ATP = L-arginyl-tRNA(Arg) + AMP + diphosphate. This Buchnera aphidicola subsp. Acyrthosiphon pisum (strain 5A) protein is Arginine--tRNA ligase.